A 241-amino-acid polypeptide reads, in one-letter code: Ribose-5-phosphate isomerase A (241 aa).

Residues threonine 28–threonine 31, aspartate 83–aspartate 86, and lysine 96–glycine 99 each bind substrate. Glutamate 105 serves as the catalytic Proton acceptor. Lysine 123 contributes to the substrate binding site.

Belongs to the ribose 5-phosphate isomerase family. In terms of assembly, homodimer.

It carries out the reaction aldehydo-D-ribose 5-phosphate = D-ribulose 5-phosphate. The protein operates within carbohydrate degradation; pentose phosphate pathway; D-ribose 5-phosphate from D-ribulose 5-phosphate (non-oxidative stage): step 1/1. Its function is as follows. Catalyzes the reversible conversion of ribose-5-phosphate to ribulose 5-phosphate. In Bradyrhizobium diazoefficiens (strain JCM 10833 / BCRC 13528 / IAM 13628 / NBRC 14792 / USDA 110), this protein is Ribose-5-phosphate isomerase A.